The chain runs to 519 residues: Cytochrome P450 52A13 (519 aa).

Cys-466 contributes to the heme binding site.

It belongs to the cytochrome P450 family. Requires heme as cofactor.

Its subcellular location is the membrane. In terms of biological role, together with an NADPH cytochrome P450 the enzyme system catalyzes the terminal hydroxylation as the first step in the assimilation of alkanes and fatty acids. This is Cytochrome P450 52A13 (CYP52A13) from Debaryomyces hansenii (Yeast).